The sequence spans 237 residues: 2,3-bisphosphoglycerate-dependent phosphoglycerate mutase (237 aa).

Substrate is bound by residues 8–15, 21–22, Arg60, 87–90, Lys98, 114–115, and 180–181; these read RHGQSQWN, TG, ERHY, RR, and GN. Catalysis depends on His9, which acts as the Tele-phosphohistidine intermediate. The Proton donor/acceptor role is filled by Glu87.

Belongs to the phosphoglycerate mutase family. BPG-dependent PGAM subfamily. Homodimer.

It carries out the reaction (2R)-2-phosphoglycerate = (2R)-3-phosphoglycerate. It participates in carbohydrate degradation; glycolysis; pyruvate from D-glyceraldehyde 3-phosphate: step 3/5. Its function is as follows. Catalyzes the interconversion of 2-phosphoglycerate and 3-phosphoglycerate. In Caulobacter vibrioides (strain ATCC 19089 / CIP 103742 / CB 15) (Caulobacter crescentus), this protein is 2,3-bisphosphoglycerate-dependent phosphoglycerate mutase.